A 46-amino-acid polypeptide reads, in one-letter code: Large ribosomal subunit protein bL34c (46 aa).

It belongs to the bacterial ribosomal protein bL34 family.

Its subcellular location is the plastid. The protein localises to the chloroplast. The chain is Large ribosomal subunit protein bL34c (rpl34) from Guillardia theta (Cryptophyte).